Consider the following 313-residue polypeptide: Small ribosomal subunit protein uS2 (313 aa).

Residues 281 to 301 form a disordered region; the sequence is AAPAAPAVEPAPEAAQEATAE.

Belongs to the universal ribosomal protein uS2 family.

The chain is Small ribosomal subunit protein uS2 from Caulobacter sp. (strain K31).